Consider the following 151-residue polypeptide: UPF0178 protein Caul_3070 (151 aa).

Belongs to the UPF0178 family.

The protein is UPF0178 protein Caul_3070 of Caulobacter sp. (strain K31).